The primary structure comprises 280 residues: Bifunctional protein FolD (280 aa).

Residues 166-168 (GRS) and S191 each bind NADP(+).

This sequence belongs to the tetrahydrofolate dehydrogenase/cyclohydrolase family. Homodimer.

It carries out the reaction (6R)-5,10-methylene-5,6,7,8-tetrahydrofolate + NADP(+) = (6R)-5,10-methenyltetrahydrofolate + NADPH. The catalysed reaction is (6R)-5,10-methenyltetrahydrofolate + H2O = (6R)-10-formyltetrahydrofolate + H(+). Its pathway is one-carbon metabolism; tetrahydrofolate interconversion. Functionally, catalyzes the oxidation of 5,10-methylenetetrahydrofolate to 5,10-methenyltetrahydrofolate and then the hydrolysis of 5,10-methenyltetrahydrofolate to 10-formyltetrahydrofolate. The polypeptide is Bifunctional protein FolD (Teredinibacter turnerae (strain ATCC 39867 / T7901)).